Consider the following 715-residue polypeptide: MKVEELRIDERIKEVLKKRGISELYPPQAEALTSGILKGENALIAIPTASGKTLIAEIAIVNRLLKEGGKAVYLVPLKALAEEKFKEFKDWEELGLKVAMATGDYDSKDEWLGGYDIIIATAEKFDSLLRHGSSWIRNVKVLVVDEIHLIGSRDRGATLEFIITQMLNRAQIIGLSATIGNPEELAEWLNAKLIKSDWRPVKLRRGVFYQGFVFWEDGKTEKFNSWEELVYDAIKRSKGSLVFVNMRRKAEKTALELSKKIRNFLTKKELRELKELAESLEENPTNEKLAKALQGGVAFHHAGLGREERVLVEENFKKGLIKVVVATPTLSAGINTPAFRVIVRDTWRYSEFGMERIPILEIQQMMGRAGRPKYDEVGEAIIVSTTEEPSTVMERYIKGKPEKLFSQLSNESILRGQILALIATFNFSSFREIYDFLERTFYAYQGKDPYTLEDRIRDIVYFLLENEFIEITLDDEIKALPLGIRTAKLYIDPMTAKIFKDTLPKIEKDPNPLGILHVISLTPDLIPLPYGKKELPMLEDEYYSFKDRLYFELDWEDERKFLRAFKTALVLNAWINEVPEGEIVEKFNVEPGDIYRIVETAEWLVYSLKEIAKTLEYSQDVINYLETLRVRVKHGIREELIPLMELPMIGRKRARALYNAGFRDLESIKNARPAELLEVEGIGAKIVEAILKHLGREVKIVQKPRKGTLDYYLHP.

The Q motif motif lies at 1–29; it reads MKVEELRIDERIKEVLKKRGISELYPPQA. ATP-binding positions include Gln28 and 46-53; that span reads IPTASGKT. A Helicase ATP-binding domain is found at 33–197; sequence TSGILKGENA…WLNAKLIKSD (165 aa). Residues 145 to 148 carry the DEAH box motif; that stretch reads DEIH. Residues 229–422 enclose the Helicase C-terminal domain; it reads LVYDAIKRSK…ILRGQILALI (194 aa).

The protein belongs to the helicase family. Hel308 subfamily. As to quaternary structure, monomer.

The enzyme catalyses Couples ATP hydrolysis with the unwinding of duplex DNA by translocating in the 3'-5' direction.. The catalysed reaction is ATP + H2O = ADP + phosphate + H(+). In terms of biological role, DNA-dependent ATPase and 3'-5' DNA helicase that may be involved in repair of stalled replication forks. The polypeptide is ATP-dependent DNA helicase Hel308 (Pyrococcus horikoshii (strain ATCC 700860 / DSM 12428 / JCM 9974 / NBRC 100139 / OT-3)).